The following is an 84-amino-acid chain: Small ribosomal subunit protein uS17 (84 aa).

The protein belongs to the universal ribosomal protein uS17 family. As to quaternary structure, part of the 30S ribosomal subunit.

In terms of biological role, one of the primary rRNA binding proteins, it binds specifically to the 5'-end of 16S ribosomal RNA. The polypeptide is Small ribosomal subunit protein uS17 (Photorhabdus laumondii subsp. laumondii (strain DSM 15139 / CIP 105565 / TT01) (Photorhabdus luminescens subsp. laumondii)).